Here is a 206-residue protein sequence, read N- to C-terminus: LexA repressor (206 aa).

A DNA-binding region (H-T-H motif) is located at residues 28 to 48; the sequence is VREIGEAVGLASSSTVHGHLD. Residues Ser128 and Lys166 each act as for autocatalytic cleavage activity in the active site.

It belongs to the peptidase S24 family. In terms of assembly, homodimer.

The catalysed reaction is Hydrolysis of Ala-|-Gly bond in repressor LexA.. Functionally, represses a number of genes involved in the response to DNA damage (SOS response), including recA and lexA. In the presence of single-stranded DNA, RecA interacts with LexA causing an autocatalytic cleavage which disrupts the DNA-binding part of LexA, leading to derepression of the SOS regulon and eventually DNA repair. The chain is LexA repressor from Exiguobacterium sp. (strain ATCC BAA-1283 / AT1b).